The primary structure comprises 400 residues: Phosphoglycerate kinase (400 aa).

Substrate contacts are provided by residues 24–26, Arg40, 63–66, Arg121, and Arg154; these read DFN and HFGR. Residues Lys205, Gly296, Glu327, and 356–359 each bind ATP; that span reads GGDS.

As to quaternary structure, monomer.

The protein localises to the cytoplasm. The enzyme catalyses (2R)-3-phosphoglycerate + ATP = (2R)-3-phospho-glyceroyl phosphate + ADP. It participates in carbohydrate degradation; glycolysis; pyruvate from D-glyceraldehyde 3-phosphate: step 2/5. This is Phosphoglycerate kinase from Nostoc sp. (strain PCC 7120 / SAG 25.82 / UTEX 2576).